The sequence spans 112 residues: UPF0145 protein RB3016 (112 aa).

It belongs to the UPF0145 family.

The polypeptide is UPF0145 protein RB3016 (Rhodopirellula baltica (strain DSM 10527 / NCIMB 13988 / SH1)).